Consider the following 401-residue polypeptide: Multidrug resistance protein MdtH (401 aa).

11 consecutive transmembrane segments (helical) span residues 13-33, 34-54, 78-95, 99-116, 139-159, 165-185, 214-234, 243-263, 289-309, 340-360, and 365-385; these read YFLL…FPLI, SIHF…ALGL, MIVT…FIAL, PWIL…GTLF, LLLM…SWLL, FVCW…ALFL, VLTL…FPII, AAVK…LYPI, FPVG…LFYL, LGLA…YDTG, and IPQL…YALH.

This sequence belongs to the major facilitator superfamily. DHA1 family. MdtH (TC 2.A.1.2.21) subfamily.

The protein resides in the cell inner membrane. This is Multidrug resistance protein MdtH from Photorhabdus laumondii subsp. laumondii (strain DSM 15139 / CIP 105565 / TT01) (Photorhabdus luminescens subsp. laumondii).